Here is a 479-residue protein sequence, read N- to C-terminus: Aspartyl/glutamyl-tRNA(Asn/Gln) amidotransferase subunit B (479 aa).

This sequence belongs to the GatB/GatE family. GatB subfamily. In terms of assembly, heterotrimer of A, B and C subunits.

It carries out the reaction L-glutamyl-tRNA(Gln) + L-glutamine + ATP + H2O = L-glutaminyl-tRNA(Gln) + L-glutamate + ADP + phosphate + H(+). The enzyme catalyses L-aspartyl-tRNA(Asn) + L-glutamine + ATP + H2O = L-asparaginyl-tRNA(Asn) + L-glutamate + ADP + phosphate + 2 H(+). Its function is as follows. Allows the formation of correctly charged Asn-tRNA(Asn) or Gln-tRNA(Gln) through the transamidation of misacylated Asp-tRNA(Asn) or Glu-tRNA(Gln) in organisms which lack either or both of asparaginyl-tRNA or glutaminyl-tRNA synthetases. The reaction takes place in the presence of glutamine and ATP through an activated phospho-Asp-tRNA(Asn) or phospho-Glu-tRNA(Gln). This Geobacter sp. (strain M21) protein is Aspartyl/glutamyl-tRNA(Asn/Gln) amidotransferase subunit B.